Consider the following 241-residue polypeptide: 3-oxoacyl-[acyl-carrier-protein] reductase FabG (241 aa).

Residues 13 to 16 (GASG), Ser38, 57 to 58 (EI), and Asn83 each bind NADP(+). Ser135 lines the substrate pocket. Residue Tyr148 is the Proton acceptor of the active site. NADP(+)-binding positions include 148–152 (YCASK) and Ile181.

Belongs to the short-chain dehydrogenases/reductases (SDR) family. In terms of assembly, homotetramer.

It catalyses the reaction a (3R)-hydroxyacyl-[ACP] + NADP(+) = a 3-oxoacyl-[ACP] + NADPH + H(+). The protein operates within lipid metabolism; fatty acid biosynthesis. In terms of biological role, catalyzes the NADPH-dependent reduction of beta-ketoacyl-ACP substrates to beta-hydroxyacyl-ACP products, the first reductive step in the elongation cycle of fatty acid biosynthesis. The sequence is that of 3-oxoacyl-[acyl-carrier-protein] reductase FabG (fabG) from Rickettsia felis (strain ATCC VR-1525 / URRWXCal2) (Rickettsia azadi).